A 175-amino-acid chain; its full sequence is ADP-ribosylation factor 6 (175 aa).

Glycine 2 is lipidated: N-myristoyl glycine. GTP-binding positions include 20 to 27, 63 to 67, and 122 to 125; these read GLDAAGKT, DVGGQ, and NKQD.

The protein belongs to the small GTPase superfamily. Arf family. In terms of tissue distribution, expressed in the head (at protein level).

Its subcellular location is the golgi apparatus. Activation is generally mediated by a guanine exchange factor (GEF), while inactivation through hydrolysis of bound GTP is catalyzed by a GTPase activating protein (GAP). May be activated by Efa6. Functionally, GTP-binding protein involved in protein trafficking; may modulate vesicle budding and uncoating within the Golgi apparatus. Promotes cell movement and remodeling of the actin cytoskeleton during compound eye morphogenesis. Required for normal ethanol-induced tolerance and preference. Probably after Efa6-mediated activation, counteracts ethanol-induced sedation. This Drosophila melanogaster (Fruit fly) protein is ADP-ribosylation factor 6.